The sequence spans 227 residues: UPF0173 metal-dependent hydrolase BPUM_2573 (227 aa).

This sequence belongs to the UPF0173 family.

This is UPF0173 metal-dependent hydrolase BPUM_2573 from Bacillus pumilus (strain SAFR-032).